Consider the following 484-residue polypeptide: Glycogen synthase (484 aa).

K15 is a binding site for ADP-alpha-D-glucose.

It belongs to the glycosyltransferase 1 family. Bacterial/plant glycogen synthase subfamily.

The enzyme catalyses [(1-&gt;4)-alpha-D-glucosyl](n) + ADP-alpha-D-glucose = [(1-&gt;4)-alpha-D-glucosyl](n+1) + ADP + H(+). The protein operates within glycan biosynthesis; glycogen biosynthesis. Its function is as follows. Synthesizes alpha-1,4-glucan chains using ADP-glucose. The sequence is that of Glycogen synthase from Koribacter versatilis (strain Ellin345).